A 185-amino-acid polypeptide reads, in one-letter code: Potassium-transporting ATPase KdpC subunit (185 aa).

The helical transmembrane segment at 14-34 (ALSLLTGVAYPLALTGIAAVI) threads the bilayer. The segment at 105-128 (AQNGAPAPVDAVTASGSGLDPHVS) is disordered.

The protein belongs to the KdpC family. As to quaternary structure, the system is composed of three essential subunits: KdpA, KdpB and KdpC.

It is found in the cell inner membrane. Part of the high-affinity ATP-driven potassium transport (or Kdp) system, which catalyzes the hydrolysis of ATP coupled with the electrogenic transport of potassium into the cytoplasm. This subunit acts as a catalytic chaperone that increases the ATP-binding affinity of the ATP-hydrolyzing subunit KdpB by the formation of a transient KdpB/KdpC/ATP ternary complex. The polypeptide is Potassium-transporting ATPase KdpC subunit (Cereibacter sphaeroides (strain ATCC 17029 / ATH 2.4.9) (Rhodobacter sphaeroides)).